The primary structure comprises 201 residues: Large ribosomal subunit protein uL4 (201 aa).

The interval 39–72 (KRQGTSAQKSRSEVIGSGKKPWRQKGTGRARAGS) is disordered.

The protein belongs to the universal ribosomal protein uL4 family. As to quaternary structure, part of the 50S ribosomal subunit.

One of the primary rRNA binding proteins, this protein initially binds near the 5'-end of the 23S rRNA. It is important during the early stages of 50S assembly. It makes multiple contacts with different domains of the 23S rRNA in the assembled 50S subunit and ribosome. In terms of biological role, forms part of the polypeptide exit tunnel. This chain is Large ribosomal subunit protein uL4, found in Wigglesworthia glossinidia brevipalpis.